We begin with the raw amino-acid sequence, 192 residues long: Fe/S biogenesis protein NfuA (192 aa).

2 residues coordinate [4Fe-4S] cluster: cysteine 149 and cysteine 152.

This sequence belongs to the NfuA family. In terms of assembly, homodimer. [4Fe-4S] cluster serves as cofactor.

Involved in iron-sulfur cluster biogenesis. Binds a 4Fe-4S cluster, can transfer this cluster to apoproteins, and thereby intervenes in the maturation of Fe/S proteins. Could also act as a scaffold/chaperone for damaged Fe/S proteins. The protein is Fe/S biogenesis protein NfuA of Alteromonas mediterranea (strain DSM 17117 / CIP 110805 / LMG 28347 / Deep ecotype).